The chain runs to 501 residues: Pentatricopeptide repeat-containing protein At2g36730 (501 aa).

9 PPR repeats span residues T77–P111, N112–F146, D147–R177, N178–P212, D213–L243, N246–K276, N277–P312, N313–I343, and M349–E379. The interval V384–G462 is type E motif. The segment at G463–T493 is type E(+) motif.

It belongs to the PPR family. PCMP-E subfamily.

The protein is Pentatricopeptide repeat-containing protein At2g36730 (PCMP-E44) of Arabidopsis thaliana (Mouse-ear cress).